The primary structure comprises 316 residues: ATP synthase gamma chain (316 aa).

It belongs to the ATPase gamma chain family. In terms of assembly, F-type ATPases have 2 components, CF(1) - the catalytic core - and CF(0) - the membrane proton channel. CF(1) has five subunits: alpha(3), beta(3), gamma(1), delta(1), epsilon(1). CF(0) has three main subunits: a, b and c.

The protein localises to the cellular thylakoid membrane. Functionally, produces ATP from ADP in the presence of a proton gradient across the membrane. The gamma chain is believed to be important in regulating ATPase activity and the flow of protons through the CF(0) complex. In Prochlorococcus marinus (strain MIT 9301), this protein is ATP synthase gamma chain.